The sequence spans 357 residues: Hydroxyproline O-arabinosyltransferase RDN1 (357 aa).

A helical; Signal-anchor membrane pass occupies residues 13 to 33 (LLMLLMVLGFSFATYNLVFMM).

As to expression, expressed in the vasculature of leaves, petioles, stems and roots. Expressed in the vascular cylinder throughout the root, and nodule vasculature.

It localises to the golgi apparatus membrane. It catalyses the reaction trans-4-hydroxy-L-prolyl-[protein] + UDP-beta-L-arabinofuranose = O-(beta-L-arabinofuranosyl)-trans-4-hydroxy-L-prolyl-[protein] + UDP + H(+). Functionally, probable glycosyltransferase involved in the O-arabinosylation of several proteins including extensins and small signaling peptides. Catalyzes the transfer of the initial L-arabinose to the hydroxyl group of Hyp residues. Probably involved in the arabinosylation of CLE12, a signaling peptide that moves from root to shoot, to interact with SUNN receptor kinase signaling that regulates nodulation. Involved in long distance nodulation signaling events. Involved in the autoregulation of nodulation (AON), a long distance systemic signaling from root to shoot and back again, which allows legumes to limit the number of root nodules formed based on available nitrogen and previous rhizobial colonization. Functions in the root, upstream of the shoot receptor kinase SUNN and via CLE peptide, to control AON. The sequence is that of Hydroxyproline O-arabinosyltransferase RDN1 from Medicago truncatula (Barrel medic).